Here is a 306-residue protein sequence, read N- to C-terminus: Pantothenate kinase (306 aa).

Residue 91 to 98 (GSVAVGKS) participates in ATP binding.

Belongs to the prokaryotic pantothenate kinase family.

It localises to the cytoplasm. The catalysed reaction is (R)-pantothenate + ATP = (R)-4'-phosphopantothenate + ADP + H(+). The protein operates within cofactor biosynthesis; coenzyme A biosynthesis; CoA from (R)-pantothenate: step 1/5. This is Pantothenate kinase (coaA) from Streptococcus pyogenes serotype M1.